A 275-amino-acid chain; its full sequence is Probable dual specificity protein phosphatase DDB_G0271350 (275 aa).

In terms of domain architecture, Tyrosine-protein phosphatase spans 2 to 143 (GISMILDNFL…LCDLELKLTN (142 aa)). The active-site Phosphocysteine intermediate is the cysteine 87.

Belongs to the protein-tyrosine phosphatase family. Non-receptor class dual specificity subfamily.

The enzyme catalyses O-phospho-L-tyrosyl-[protein] + H2O = L-tyrosyl-[protein] + phosphate. It carries out the reaction O-phospho-L-seryl-[protein] + H2O = L-seryl-[protein] + phosphate. The catalysed reaction is O-phospho-L-threonyl-[protein] + H2O = L-threonyl-[protein] + phosphate. Functionally, has a dual specificity toward Ser/Thr and Tyr-containing proteins. The polypeptide is Probable dual specificity protein phosphatase DDB_G0271350 (Dictyostelium discoideum (Social amoeba)).